Consider the following 364-residue polypeptide: Fructose-bisphosphate aldolase A (364 aa).

Y5 carries the phosphotyrosine modification. At T9 the chain carries Phosphothreonine. Phosphoserine is present on residues S36 and S39. The residue at position 42 (K42) is an N6-acetyllysine; alternate. K42 participates in a covalent cross-link: Glycyl lysine isopeptide (Lys-Gly) (interchain with G-Cter in SUMO1); alternate. K42 is covalently cross-linked (Glycyl lysine isopeptide (Lys-Gly) (interchain with G-Cter in SUMO2); alternate). R43 serves as a coordination point for beta-D-fructose 1,6-bisphosphate. A Phosphoserine modification is found at S46. Position 99 is an N6-(2-hydroxyisobutyryl)lysine (K99). An N6-acetyllysine modification is found at K108. Residue K111 is modified to N6-acetyllysine; alternate. N6-malonyllysine; alternate is present on K111. S132 carries the post-translational modification Phosphoserine. The residue at position 147 (K147) is an N6-(2-hydroxyisobutyryl)lysine. Residue E188 is the Proton acceptor of the active site. K230 serves as the catalytic Schiff-base intermediate with dihydroxyacetone-P. A Phosphoserine modification is found at S272. Residues 272 to 274 (SGG), S301, and R304 each bind beta-D-fructose 1,6-bisphosphate. At K312 the chain carries N6-malonyllysine. At K330 the chain carries N6-acetyllysine.

Belongs to the class I fructose-bisphosphate aldolase family. As to quaternary structure, homotetramer. Interacts with SNX9 and WAS. Interacts with FBP2; the interaction blocks FBP2 inhibition by physiological concentrations of AMP and reduces inhibition by Ca(2+).

It is found in the cytoplasm. Its subcellular location is the myofibril. The protein localises to the sarcomere. It localises to the i band. The protein resides in the m line. The catalysed reaction is beta-D-fructose 1,6-bisphosphate = D-glyceraldehyde 3-phosphate + dihydroxyacetone phosphate. It functions in the pathway carbohydrate degradation; glycolysis; D-glyceraldehyde 3-phosphate and glycerone phosphate from D-glucose: step 4/4. Functionally, catalyzes the reversible conversion of beta-D-fructose 1,6-bisphosphate (FBP) into two triose phosphate and plays a key role in glycolysis and gluconeogenesis. In addition, may also function as scaffolding protein. The protein is Fructose-bisphosphate aldolase A (ALDOA) of Pongo abelii (Sumatran orangutan).